A 232-amino-acid chain; its full sequence is NAD(P)H-quinone oxidoreductase subunit K 1 (232 aa).

Residues Cys49, Cys50, Cys114, and Cys145 each contribute to the [4Fe-4S] cluster site.

It belongs to the complex I 20 kDa subunit family. In terms of assembly, NDH-1 can be composed of about 15 different subunits; different subcomplexes with different compositions have been identified which probably have different functions. Requires [4Fe-4S] cluster as cofactor.

It localises to the cellular thylakoid membrane. It catalyses the reaction a plastoquinone + NADH + (n+1) H(+)(in) = a plastoquinol + NAD(+) + n H(+)(out). The enzyme catalyses a plastoquinone + NADPH + (n+1) H(+)(in) = a plastoquinol + NADP(+) + n H(+)(out). NDH-1 shuttles electrons from an unknown electron donor, via FMN and iron-sulfur (Fe-S) centers, to quinones in the respiratory and/or the photosynthetic chain. The immediate electron acceptor for the enzyme in this species is believed to be plastoquinone. Couples the redox reaction to proton translocation, and thus conserves the redox energy in a proton gradient. Cyanobacterial NDH-1 also plays a role in inorganic carbon-concentration. The polypeptide is NAD(P)H-quinone oxidoreductase subunit K 1 (Acaryochloris marina (strain MBIC 11017)).